The primary structure comprises 252 residues: Putative hydro-lyase OB3382 (252 aa).

Belongs to the D-glutamate cyclase family.

This Oceanobacillus iheyensis (strain DSM 14371 / CIP 107618 / JCM 11309 / KCTC 3954 / HTE831) protein is Putative hydro-lyase OB3382.